The following is a 189-amino-acid chain: Molybdopterin synthase catalytic subunit (189 aa).

At Ser20 the chain carries Phosphoserine. Residues 143–144, Lys159, and 166–168 each bind substrate; these read HR and KKE.

It belongs to the MoaE family. MOCS2B subfamily. Heterotetramer; composed of 2 small (MOCS2A) and 2 large (MOCS2B) subunits.

The protein resides in the cytoplasm. It is found in the cytosol. The enzyme catalyses 2 [molybdopterin-synthase sulfur-carrier protein]-C-terminal-Gly-aminoethanethioate + cyclic pyranopterin phosphate + H2O = molybdopterin + 2 [molybdopterin-synthase sulfur-carrier protein]-C-terminal Gly-Gly + 2 H(+). It functions in the pathway cofactor biosynthesis; molybdopterin biosynthesis. Functionally, catalytic subunit of the molybdopterin synthase complex, a complex that catalyzes the conversion of precursor Z into molybdopterin. Acts by mediating the incorporation of 2 sulfur atoms from thiocarboxylated MOCS2A into precursor Z to generate a dithiolene group. The sequence is that of Molybdopterin synthase catalytic subunit from Bos taurus (Bovine).